Here is a 130-residue protein sequence, read N- to C-terminus: Small ribosomal subunit protein uS8 (130 aa).

It belongs to the universal ribosomal protein uS8 family. Part of the 30S ribosomal subunit. Contacts proteins S5 and S12.

Functionally, one of the primary rRNA binding proteins, it binds directly to 16S rRNA central domain where it helps coordinate assembly of the platform of the 30S subunit. This chain is Small ribosomal subunit protein uS8, found in Proteus mirabilis (strain HI4320).